The following is a 326-amino-acid chain: Metal-binding protein YtgA (326 aa).

Residues 1–21 (MFFLHVRKYKHVIGGLLCLAG) form the signal peptide. The Fe(2+) site is built by histidine 75, histidine 141, histidine 207, and aspartate 299.

This sequence belongs to the bacterial solute-binding protein 9 family. As to quaternary structure, monomer.

It is found in the periplasm. Part of the ATP-binding cassette (ABC) transport system YtgABCD involved in metal import. Binds Fe(2+), Mn(2+) and Ni(2+), with a preference for Fe(2+) and delivers them to the membrane permease for translocation into the cytoplasm. The sequence is that of Metal-binding protein YtgA from Chlamydia muridarum (strain MoPn / Nigg).